Here is a 324-residue protein sequence, read N- to C-terminus: DNA repair and recombination protein RadA (324 aa).

114–121 (GEFGSGKT) is an ATP binding site.

This sequence belongs to the eukaryotic RecA-like protein family.

Functionally, involved in DNA repair and in homologous recombination. Binds and assemble on single-stranded DNA to form a nucleoprotein filament. Hydrolyzes ATP in a ssDNA-dependent manner and promotes DNA strand exchange between homologous DNA molecules. In Saccharolobus islandicus (strain Y.N.15.51 / Yellowstone #2) (Sulfolobus islandicus), this protein is DNA repair and recombination protein RadA.